The sequence spans 392 residues: Aryl-hydrocarbon-interacting protein-like 1 (392 aa).

Residues Arg-53–Gln-145 form the PPIase FKBP-type domain. 3 TPR repeats span residues Val-178–Leu-211, Asn-230–Ile-263, and Val-264–Met-297. Residues Gln-329–His-392 are disordered. 2 stretches are compositionally biased toward pro residues: residues Pro-335 to Pro-346 and Pro-355 to Pro-366.

As to quaternary structure, interacts with NUB1.

It is found in the cytoplasm. The protein resides in the nucleus. In terms of biological role, may be important in protein trafficking and/or protein folding and stabilization. This chain is Aryl-hydrocarbon-interacting protein-like 1 (AIPL1), found in Macaca mulatta (Rhesus macaque).